Here is an 87-residue protein sequence, read N- to C-terminus: uncharacterized protein (87 aa).

Positions 1-19 are cleaved as a signal peptide; that stretch reads MLVLQLAVLVTAVYAFVHA. A helical membrane pass occupies residues 51 to 71; that stretch reads ILGFVFGVLGIVIAACAAGVY.

This sequence to M.tuberculosis Rv0476.

It is found in the membrane. This is an uncharacterized protein from Mycobacterium leprae (strain TN).